The following is a 51-amino-acid chain: Insulin (51 aa).

3 cysteine pairs are disulfide-bonded: Cys-7–Cys-37, Cys-19–Cys-50, and Cys-36–Cys-41.

The protein belongs to the insulin family. As to quaternary structure, heterodimer of a B chain and an A chain linked by two disulfide bonds.

The protein localises to the secreted. Its function is as follows. Insulin decreases blood glucose concentration. It increases cell permeability to monosaccharides, amino acids and fatty acids. It accelerates glycolysis, the pentose phosphate cycle, and glycogen synthesis in liver. The chain is Insulin (INS) from Didelphis virginiana (North American opossum).